The following is a 266-amino-acid chain: UPF0294 protein YafD (266 aa).

This sequence belongs to the UPF0294 family.

The protein localises to the cytoplasm. The sequence is that of UPF0294 protein YafD from Salmonella agona (strain SL483).